Reading from the N-terminus, the 362-residue chain is Chorismate synthase (362 aa).

The disordered stretch occupies residues Ala-39–Arg-59. Arg-48 and Arg-54 together coordinate NADP(+). FMN contacts are provided by residues Arg-125–Ser-127, Asn-238–Ala-239, Gly-278, Lys-293–Ser-297, and Arg-319.

It belongs to the chorismate synthase family. As to quaternary structure, homotetramer. FMNH2 serves as cofactor.

It carries out the reaction 5-O-(1-carboxyvinyl)-3-phosphoshikimate = chorismate + phosphate. The protein operates within metabolic intermediate biosynthesis; chorismate biosynthesis; chorismate from D-erythrose 4-phosphate and phosphoenolpyruvate: step 7/7. Functionally, catalyzes the anti-1,4-elimination of the C-3 phosphate and the C-6 proR hydrogen from 5-enolpyruvylshikimate-3-phosphate (EPSP) to yield chorismate, which is the branch point compound that serves as the starting substrate for the three terminal pathways of aromatic amino acid biosynthesis. This reaction introduces a second double bond into the aromatic ring system. The sequence is that of Chorismate synthase from Aeromonas hydrophila subsp. hydrophila (strain ATCC 7966 / DSM 30187 / BCRC 13018 / CCUG 14551 / JCM 1027 / KCTC 2358 / NCIMB 9240 / NCTC 8049).